The sequence spans 309 residues: CDK-activating kinase assembly factor MAT1 (309 aa).

An RING-type zinc finger spans residues 6 to 50; the sequence is CPRCKTTKYRNPSLKLMVNVCGHTLCESCVELLFVRGSGSCQECD. Residues 142 to 161 enclose the UIM domain; sequence REQEELEEALEMEKHENEQR.

In terms of assembly, associates with CDK7 and cyclin H.

The protein resides in the nucleus. Functionally, stabilizes the cyclin H-CDK7 complex to form a functional CDK-activating kinase (CAK) enzymatic complex. The chain is CDK-activating kinase assembly factor MAT1 (mnat1) from Xenopus laevis (African clawed frog).